Consider the following 423-residue polypeptide: UPF0229 protein PSPTO_0546 (423 aa).

A disordered region spans residues 65–110 (HHGRGGKQTVVHPGNKEFTTGEHIARPQGGAGGKGPGKAGNSGEGM). Residues 93–107 (GGAGGKGPGKAGNSG) are compositionally biased toward gly residues.

The protein belongs to the UPF0229 family.

In Pseudomonas syringae pv. tomato (strain ATCC BAA-871 / DC3000), this protein is UPF0229 protein PSPTO_0546.